The sequence spans 182 residues: Protein GrpE (182 aa).

The segment covering 1 to 17 (MEEKKRCEESEKIKEQE) has biased composition (basic and acidic residues). Residues 1–33 (MEEKKRCEESEKIKEQENETLPNEDSPSMGKKV) are disordered.

Belongs to the GrpE family. As to quaternary structure, homodimer.

It is found in the cytoplasm. Functionally, participates actively in the response to hyperosmotic and heat shock by preventing the aggregation of stress-denatured proteins, in association with DnaK and GrpE. It is the nucleotide exchange factor for DnaK and may function as a thermosensor. Unfolded proteins bind initially to DnaJ; upon interaction with the DnaJ-bound protein, DnaK hydrolyzes its bound ATP, resulting in the formation of a stable complex. GrpE releases ADP from DnaK; ATP binding to DnaK triggers the release of the substrate protein, thus completing the reaction cycle. Several rounds of ATP-dependent interactions between DnaJ, DnaK and GrpE are required for fully efficient folding. The chain is Protein GrpE from Borrelia hermsii (strain HS1 / DAH).